The primary structure comprises 278 residues: Acetyl-coenzyme A carboxylase carboxyl transferase subunit beta (278 aa).

The region spanning 23–278 (LWSKCDSCGA…QLIKLLGHMK (256 aa)) is the CoA carboxyltransferase N-terminal domain. Cys-27, Cys-30, Cys-46, and Cys-49 together coordinate Zn(2+). The C4-type zinc finger occupies 27-49 (CDSCGAALHKKQLEDHLYTCPHC).

It belongs to the AccD/PCCB family. In terms of assembly, acetyl-CoA carboxylase is a heterohexamer composed of biotin carboxyl carrier protein (AccB), biotin carboxylase (AccC) and two subunits each of ACCase subunit alpha (AccA) and ACCase subunit beta (AccD). The cofactor is Zn(2+).

It localises to the cytoplasm. The catalysed reaction is N(6)-carboxybiotinyl-L-lysyl-[protein] + acetyl-CoA = N(6)-biotinyl-L-lysyl-[protein] + malonyl-CoA. The protein operates within lipid metabolism; malonyl-CoA biosynthesis; malonyl-CoA from acetyl-CoA: step 1/1. Component of the acetyl coenzyme A carboxylase (ACC) complex. Biotin carboxylase (BC) catalyzes the carboxylation of biotin on its carrier protein (BCCP) and then the CO(2) group is transferred by the transcarboxylase to acetyl-CoA to form malonyl-CoA. This is Acetyl-coenzyme A carboxylase carboxyl transferase subunit beta from Chlorobaculum tepidum (strain ATCC 49652 / DSM 12025 / NBRC 103806 / TLS) (Chlorobium tepidum).